A 372-amino-acid chain; its full sequence is NAD(P)H-quinone oxidoreductase subunit 1 (372 aa).

A run of 9 helical transmembrane segments spans residues Ala-27 to Val-47, Pro-65 to Phe-85, Trp-97 to Val-117, Ile-128 to Met-148, Ala-166 to Met-186, Ile-204 to Leu-224, Val-266 to Ile-286, Ala-308 to Leu-328, and Phe-347 to Pro-367.

This sequence belongs to the complex I subunit 1 family. As to quaternary structure, NDH-1 is composed of at least 11 different subunits.

It is found in the cellular thylakoid membrane. The catalysed reaction is a plastoquinone + NADH + (n+1) H(+)(in) = a plastoquinol + NAD(+) + n H(+)(out). It carries out the reaction a plastoquinone + NADPH + (n+1) H(+)(in) = a plastoquinol + NADP(+) + n H(+)(out). Functionally, NDH-1 shuttles electrons from an unknown electron donor, via FMN and iron-sulfur (Fe-S) centers, to quinones in the respiratory and/or the photosynthetic chain. The immediate electron acceptor for the enzyme in this species is believed to be plastoquinone. Couples the redox reaction to proton translocation, and thus conserves the redox energy in a proton gradient. This Trichormus variabilis (strain ATCC 29413 / PCC 7937) (Anabaena variabilis) protein is NAD(P)H-quinone oxidoreductase subunit 1.